We begin with the raw amino-acid sequence, 483 residues long: Zinc metalloproteinase/disintegrin (483 aa).

An N-terminal signal peptide occupies residues 1 to 20 (MIQVLLVTLCLAAFPYQGNS). A propeptide spanning residues 21–191 (IILESGNVND…KASQLNLTPE (171 aa)) is cleaved from the precursor. The region spanning 198–394 (RYIELVVVAD…HNPQCMLNEP (197 aa)) is the Peptidase M12B domain. Residues glutamate 201 and aspartate 285 each coordinate Ca(2+). 3 disulfide bridges follow: cysteine 309-cysteine 389, cysteine 349-cysteine 373, and cysteine 351-cysteine 356. Histidine 334 provides a ligand contact to Zn(2+). Glutamate 335 is a catalytic residue. Residues histidine 338 and histidine 344 each coordinate Zn(2+). Cysteine 389 and asparagine 392 together coordinate Ca(2+). A propeptide spanning residues 395 to 414 (LRTDIVSTPVSGNELWETGE) is cleaved from the precursor. Positions 402–483 (TPVSGNELWE…AGCPRNPFHA (82 aa)) constitute a Disintegrin domain. 4 disulfide bridges follow: cysteine 425–cysteine 448, cysteine 439–cysteine 445, cysteine 444–cysteine 469, and cysteine 457–cysteine 476. The Cell attachment site; atypical (KGD) motif lies at 461 to 463 (KGD).

This sequence belongs to the venom metalloproteinase (M12B) family. P-II subfamily. P-IIe sub-subfamily. Heterodimer with piscivostatin-alpha; disulfide-linked (disintegrin). Requires Zn(2+) as cofactor. As to expression, expressed by the venom gland.

Its subcellular location is the secreted. In terms of biological role, impairs hemostasis in the envenomed animal. Inhibits platelet aggregation induced by ADP. Acts by inhibiting fibrinogen interaction with platelet receptors GPIIb/GPIIIa (ITGA2B/ITGB3). Also inhibits platelet aggregate dissociation in human platelet-rich plasma. In Agkistrodon piscivorus piscivorus (Eastern cottonmouth), this protein is Zinc metalloproteinase/disintegrin.